The following is a 276-amino-acid chain: uncharacterized protein (276 aa).

Helical transmembrane passes span 5-25 (TDLI…GMLA), 32-52 (PLVG…GFVG), 64-84 (GVIL…LLAV), 104-124 (AGLA…GLAL), 149-169 (IAVG…VLLP), 193-213 (LWVT…VMLV), and 244-264 (VGIA…GAFF).

This sequence belongs to the monovalent cation:proton antiporter 2 (CPA2) transporter (TC 2.A.37) family.

Its subcellular location is the cell membrane. This is an uncharacterized protein from Methylorubrum extorquens (Methylobacterium dichloromethanicum).